A 159-amino-acid polypeptide reads, in one-letter code: Transcription elongation factor GreA (159 aa).

Positions 5-77 form a coiled coil; it reads REVVLTAQGL…LETMLRKAVI (73 aa).

It belongs to the GreA/GreB family.

Functionally, necessary for efficient RNA polymerase transcription elongation past template-encoded arresting sites. The arresting sites in DNA have the property of trapping a certain fraction of elongating RNA polymerases that pass through, resulting in locked ternary complexes. Cleavage of the nascent transcript by cleavage factors such as GreA or GreB allows the resumption of elongation from the new 3'terminus. GreA releases sequences of 2 to 3 nucleotides. This chain is Transcription elongation factor GreA, found in Alkaliphilus oremlandii (strain OhILAs) (Clostridium oremlandii (strain OhILAs)).